A 389-amino-acid chain; its full sequence is Alkanesulfonate monooxygenase (389 aa).

The protein belongs to the SsuD family.

The enzyme catalyses an alkanesulfonate + FMNH2 + O2 = an aldehyde + FMN + sulfite + H2O + 2 H(+). Its function is as follows. Catalyzes the desulfonation of aliphatic sulfonates. This is Alkanesulfonate monooxygenase from Agrobacterium fabrum (strain C58 / ATCC 33970) (Agrobacterium tumefaciens (strain C58)).